We begin with the raw amino-acid sequence, 158 residues long: Cyclic pyranopterin monophosphate synthase (158 aa).

Substrate-binding positions include 76 to 78 (LCH) and 114 to 115 (ME). Aspartate 129 is a catalytic residue.

Belongs to the MoaC family. In terms of assembly, homohexamer; trimer of dimers.

The enzyme catalyses (8S)-3',8-cyclo-7,8-dihydroguanosine 5'-triphosphate = cyclic pyranopterin phosphate + diphosphate. The protein operates within cofactor biosynthesis; molybdopterin biosynthesis. In terms of biological role, catalyzes the conversion of (8S)-3',8-cyclo-7,8-dihydroguanosine 5'-triphosphate to cyclic pyranopterin monophosphate (cPMP). This Shewanella frigidimarina (strain NCIMB 400) protein is Cyclic pyranopterin monophosphate synthase.